Consider the following 315-residue polypeptide: 4-hydroxy-3-methylbut-2-enyl diphosphate reductase (315 aa).

Cys12 lines the [4Fe-4S] cluster pocket. (2E)-4-hydroxy-3-methylbut-2-enyl diphosphate contacts are provided by His41 and His74. Residues His41 and His74 each coordinate dimethylallyl diphosphate. 2 residues coordinate isopentenyl diphosphate: His41 and His74. A [4Fe-4S] cluster-binding site is contributed by Cys96. His124 contributes to the (2E)-4-hydroxy-3-methylbut-2-enyl diphosphate binding site. His124 lines the dimethylallyl diphosphate pocket. His124 is an isopentenyl diphosphate binding site. The Proton donor role is filled by Glu126. Thr168 is a (2E)-4-hydroxy-3-methylbut-2-enyl diphosphate binding site. Cys198 is a [4Fe-4S] cluster binding site. Residues Ser226, Ser227, Asn228, and Ser270 each contribute to the (2E)-4-hydroxy-3-methylbut-2-enyl diphosphate site. 4 residues coordinate dimethylallyl diphosphate: Ser226, Ser227, Asn228, and Ser270. Isopentenyl diphosphate-binding residues include Ser226, Ser227, Asn228, and Ser270.

Belongs to the IspH family. It depends on [4Fe-4S] cluster as a cofactor.

The enzyme catalyses isopentenyl diphosphate + 2 oxidized [2Fe-2S]-[ferredoxin] + H2O = (2E)-4-hydroxy-3-methylbut-2-enyl diphosphate + 2 reduced [2Fe-2S]-[ferredoxin] + 2 H(+). It carries out the reaction dimethylallyl diphosphate + 2 oxidized [2Fe-2S]-[ferredoxin] + H2O = (2E)-4-hydroxy-3-methylbut-2-enyl diphosphate + 2 reduced [2Fe-2S]-[ferredoxin] + 2 H(+). The protein operates within isoprenoid biosynthesis; dimethylallyl diphosphate biosynthesis; dimethylallyl diphosphate from (2E)-4-hydroxy-3-methylbutenyl diphosphate: step 1/1. It participates in isoprenoid biosynthesis; isopentenyl diphosphate biosynthesis via DXP pathway; isopentenyl diphosphate from 1-deoxy-D-xylulose 5-phosphate: step 6/6. Functionally, catalyzes the conversion of 1-hydroxy-2-methyl-2-(E)-butenyl 4-diphosphate (HMBPP) into a mixture of isopentenyl diphosphate (IPP) and dimethylallyl diphosphate (DMAPP). Acts in the terminal step of the DOXP/MEP pathway for isoprenoid precursor biosynthesis. In Pseudomonas syringae pv. tomato (strain ATCC BAA-871 / DC3000), this protein is 4-hydroxy-3-methylbut-2-enyl diphosphate reductase.